The sequence spans 507 residues: ATP synthase subunit alpha, plastid (507 aa).

ATP is bound at residue G170–T177.

It belongs to the ATPase alpha/beta chains family. As to quaternary structure, F-type ATPases have 2 components, CF(1) - the catalytic core - and CF(0) - the membrane proton channel. CF(1) has five subunits: alpha(3), beta(3), gamma(1), delta(1), epsilon(1). CF(0) has four main subunits: a, b, b' and c.

It is found in the plastid membrane. The enzyme catalyses ATP + H2O + 4 H(+)(in) = ADP + phosphate + 5 H(+)(out). Produces ATP from ADP in the presence of a proton gradient across the membrane. The alpha chain is a regulatory subunit. This chain is ATP synthase subunit alpha, plastid, found in Aneura mirabilis (Parasitic liverwort).